We begin with the raw amino-acid sequence, 1200 residues long: ATP-dependent helicase/deoxyribonuclease subunit B (1200 aa).

Belongs to the helicase family. AddB/RexB type 2 subfamily. As to quaternary structure, heterodimer of AddA and RexB. Mg(2+) is required as a cofactor.

The heterodimer acts as both an ATP-dependent DNA helicase and an ATP-dependent, dual-direction single-stranded exonuclease. Recognizes the chi site generating a DNA molecule suitable for the initiation of homologous recombination. This subunit has 5' -&gt; 3' nuclease activity but not helicase activity. This chain is ATP-dependent helicase/deoxyribonuclease subunit B, found in Lactiplantibacillus plantarum (strain ATCC BAA-793 / NCIMB 8826 / WCFS1) (Lactobacillus plantarum).